Reading from the N-terminus, the 117-residue chain is Ribonuclease P protein component 4 (117 aa).

Residues C64, C67, C93, and C96 each coordinate Zn(2+).

Belongs to the eukaryotic/archaeal RNase P protein component 4 family. Consists of a catalytic RNA component and at least 4-5 protein subunits. It depends on Zn(2+) as a cofactor.

It is found in the cytoplasm. It catalyses the reaction Endonucleolytic cleavage of RNA, removing 5'-extranucleotides from tRNA precursor.. Functionally, part of ribonuclease P, a protein complex that generates mature tRNA molecules by cleaving their 5'-ends. The chain is Ribonuclease P protein component 4 from Pyrococcus abyssi (strain GE5 / Orsay).